The primary structure comprises 272 residues: Troponin T, fast skeletal muscle (272 aa).

Residues 1–50 (MSDEETEQVEEQYEEEEEAQEEEVQEEAPEPEEVQEDAVAEEEREEDEEE) are compositionally biased toward acidic residues. The tract at residues 1 to 75 (MSDEETEQVE…EKVDFDDIQK (75 aa)) is disordered. Ser2 carries the N-acetylserine modification. Phosphoserine is present on Ser2. Positions 63 to 75 (PEGEKVDFDDIQK) are enriched in basic and acidic residues. Ser91 carries the post-translational modification Phosphoserine. Basic and acidic residues predominate over residues 114–156 (RAERAEQQRIRAEKEREPQNRLAEEKARREEEDAKRRAEDDMK). Residues 114 to 193 (RAERAEQQRI…TAREMKKKIL (80 aa)) form a disordered region. A phosphoserine mark is found at Ser162, Ser169, and Ser170. The segment covering 184-193 (TAREMKKKIL) has biased composition (basic and acidic residues). A Phosphoserine modification is found at Ser206. The residue at position 222 (Tyr222) is a Phosphotyrosine. The tract at residues 248 to 272 (RIDQAQKHSKKAGATAKGKVGGRWK) is disordered.

The protein belongs to the troponin T family. In terms of tissue distribution, expressed predominantly in skeletal muscle.

Troponin T is the tropomyosin-binding subunit of troponin, the thin filament regulatory complex which confers calcium-sensitivity to striated muscle actomyosin ATPase activity. The chain is Troponin T, fast skeletal muscle (Tnnt3) from Mus musculus (Mouse).